Reading from the N-terminus, the 638-residue chain is ATP-dependent rRNA helicase spb4 (638 aa).

The Q motif motif lies at 14 to 42 (WDGVSPSLSEWVLEAVSSMGFTRMTPVQA). The 205-residue stretch at 45-249 (IPLFMAHKDV…RVGLRNPVKV (205 aa)) folds into the Helicase ATP-binding domain. 58–65 (AVTGSGKT) serves as a coordination point for ATP. A DEAD box motif is present at residues 197 to 200 (DEAD). The Helicase C-terminal domain occupies 283-437 (ALKHILHSVD…PISFSESEAT (155 aa)). Composition is skewed to basic and acidic residues over residues 534–554 (LLQE…RKAT) and 577–615 (QRRQ…EERR). The interval 534–638 (LLQESKEGDG…KDEEEFEGFD (105 aa)) is disordered. Residues 566–619 (RNKKQKRREQKQRRQEKNKWEKMTEEERQKIRETEQMVESIRVKNEEERRLRRA) are a coiled coil.

It belongs to the DEAD box helicase family. DDX55/SPB4 subfamily. Component of pre-60S ribosomal complexes.

The protein localises to the nucleus. The protein resides in the nucleolus. It catalyses the reaction ATP + H2O = ADP + phosphate + H(+). Functionally, ATP-binding RNA helicase involved in the biogenesis of 60S ribosomal subunits. Binds 90S pre-ribosomal particles and dissociates from pre-60S ribosomal particles after processing of 27SB pre-rRNA. Required for the normal formation of 18S rRNA through the processing of pre-rRNAs at sites A0, A1 and A2, and the normal formation of 25S and 5.8S rRNAs through the processing of pre-rRNAs at sites C1 and C2. The sequence is that of ATP-dependent rRNA helicase spb4 from Aspergillus oryzae (strain ATCC 42149 / RIB 40) (Yellow koji mold).